A 225-amino-acid chain; its full sequence is MNGIRDVVKEEQPRERLLLEGAGSLSNRELLAVLLRTGSKDETVLKLSDKILHHFDGLRMLKDATLEELVSIHGVGVAKASQLIAAFELGRRMVRLEYQNRYSIRSPEDCARYMMEEMRFLQQEHFVCLYLNTKNQVIHRQTIFIGSLNSSIVHPREVFKEAFRRAAASIICLHNHPSGDPAPSREDIEVTKRLVECGRIIGIEVLDHIIIGDHKFVSLKEKGHI.

In terms of domain architecture, MPN spans 103–225; that stretch reads SIRSPEDCAR…FVSLKEKGHI (123 aa). 3 residues coordinate Zn(2+): His174, His176, and Asp187. The JAMM motif signature appears at 174 to 187; sequence HNHPSGDPAPSRED.

The protein belongs to the UPF0758 family.

In Bacillus cereus (strain Q1), this protein is UPF0758 protein BCQ_4241.